The chain runs to 161 residues: ATP synthase subunit b (161 aa).

Residues 10–29 traverse the membrane as a helical segment; the sequence is SVIQLMSFFLLLYILKKFLY.

This sequence belongs to the ATPase B chain family. In terms of assembly, F-type ATPases have 2 components, F(1) - the catalytic core - and F(0) - the membrane proton channel. F(1) has five subunits: alpha(3), beta(3), gamma(1), delta(1), epsilon(1). F(0) has three main subunits: a(1), b(2) and c(10-14). The alpha and beta chains form an alternating ring which encloses part of the gamma chain. F(1) is attached to F(0) by a central stalk formed by the gamma and epsilon chains, while a peripheral stalk is formed by the delta and b chains.

The protein resides in the cell inner membrane. F(1)F(0) ATP synthase produces ATP from ADP in the presence of a proton or sodium gradient. F-type ATPases consist of two structural domains, F(1) containing the extramembraneous catalytic core and F(0) containing the membrane proton channel, linked together by a central stalk and a peripheral stalk. During catalysis, ATP synthesis in the catalytic domain of F(1) is coupled via a rotary mechanism of the central stalk subunits to proton translocation. Its function is as follows. Component of the F(0) channel, it forms part of the peripheral stalk, linking F(1) to F(0). The chain is ATP synthase subunit b from Thermosipho melanesiensis (strain DSM 12029 / CIP 104789 / BI429).